The sequence spans 142 residues: MAP3K7 C-terminal-like protein (142 aa).

In terms of tissue distribution, detected in lung and peripheral blood leukocytes. Expressed predominantly in peripheral blood leukocytes and ubiquitously in adult and fetal tissues. Also expressed strongly in breast carcinoma GI-101, colon adenocarcinoma GI-112, and prostatic adenocarcinoma PC3.

In Homo sapiens (Human), this protein is MAP3K7 C-terminal-like protein (MAP3K7CL).